A 108-amino-acid chain; its full sequence is UPF0145 protein HDEF_1024 (108 aa).

Belongs to the UPF0145 family.

In Hamiltonella defensa subsp. Acyrthosiphon pisum (strain 5AT), this protein is UPF0145 protein HDEF_1024.